A 215-amino-acid polypeptide reads, in one-letter code: Vesicle-trafficking protein SEC22b (215 aa).

At 1–190 (MVLLTMIARV…RQDAKYLNMR (190 aa)) the chain is on the cytoplasmic side. One can recognise a Longin domain in the interval 6–119 (MIARVADGLP…YSFIEFDNYI (114 aa)). Residues 134 to 194 (NLSSVNTELQ…KYLNMRSTYA (61 aa)) enclose the v-SNARE coiled-coil homology domain. A helical membrane pass occupies residues 191 to 213 (STYAKLAAVAVFSVMLIVYIRFW). Residues 214–215 (WL) lie on the Lumenal side of the membrane.

This sequence belongs to the synaptobrevin family. As to quaternary structure, component of 2 distinct SNARE complexes.

The protein localises to the endoplasmic reticulum membrane. It is found in the endoplasmic reticulum-Golgi intermediate compartment membrane. Its subcellular location is the golgi apparatus. It localises to the cis-Golgi network membrane. The protein resides in the trans-Golgi network membrane. The protein localises to the melanosome. In terms of biological role, SNARE involved in targeting and fusion of ER-derived transport vesicles with the Golgi complex as well as Golgi-derived retrograde transport vesicles with the ER. This chain is Vesicle-trafficking protein SEC22b, found in Xenopus tropicalis (Western clawed frog).